The sequence spans 1673 residues: NBPF family member NBPF26 (1673 aa).

EGF-like domains lie at 24-63, 64-102, 105-143, and 144-180; these read HALQ…EYCQ, HRDP…EDCQ, TPHP…KECQ, and WTDA…QKCE. 17 disulfides stabilise this stretch: Cys28–Cys41, Cys35–Cys51, Cys53–Cys62, Cys68–Cys79, Cys73–Cys90, Cys92–Cys101, Cys109–Cys121, Cys115–Cys131, Cys133–Cys142, Cys148–Cys159, Cys153–Cys168, Cys170–Cys179, Cys186–Cys198, Cys192–Cys207, Cys209–Cys218, Cys225–Cys236, and Cys230–Cys246. The region spanning 182–219 is the EGF-like 5; calcium-binding domain; sequence DVNECDIPGHCQHGGTCLNLPGSYQCQCLQGFTGQYCD. The region spanning 221 to 258 is the EGF-like 6 domain; the sequence is LYVPCAHSPCVNGGTCRQTGDFTFECNCLPVPDSTSSA. Positions 337–381 form a coiled coil; it reads RQFKEEKLAEQLKQAEELRQYKVLVHSQERELTQLKEKLREGRDA. 3 disordered regions span residues 423–463, 713–734, and 782–828; these read KLSP…KVPE, EKVQ…EVPE, and WEDA…EGYS. Residues 427–443 show a composition bias toward acidic residues; that stretch reads ENDEDEDEDVQVEEDEK. Olduvai domains lie at 427–521, 698–790, 791–879, 882–937, 938–1029, 1032–1104, 1107–1162, 1163–1255, 1256–1348, 1351–1423, 1426–1481, 1482–1574, and 1575–1673; these read ENDE…NILP, ENDN…HIIP, ENES…ATGP, SREL…VDMD, EIEK…PSCP, SGEL…PSCP, SREL…LDVD, RIKK…RSKK, ERRR…PSCP, SREL…PSCP, and ERRR…IFPQ. Residues 452 to 463 show a composition bias toward basic and acidic residues; that stretch reads EVQKTEESKVPE. 2 stretches are compositionally biased toward acidic residues: residues 792 to 801 and 812 to 824; these read NESDDEEEEE and ESEE…ESWD. The segment at 1242–1280 is disordered; sequence KGKGKKRRGRRSKKERRRGRKEGEEDQNPPCPRLSRELL. The segment covering 1243–1261 has biased composition (basic residues); sequence GKGKKRRGRRSKKERRRGR. The interval 1561–1594 is disordered; that stretch reads KGKGKKRRGRRSKKERRRGRKEGEEDQNPPCPRL. The span at 1562-1580 shows a compositional bias: basic residues; sequence GKGKKRRGRRSKKERRRGR.

This sequence belongs to the NBPF family.

Its subcellular location is the cytoplasm. The polypeptide is NBPF family member NBPF26 (Homo sapiens (Human)).